The chain runs to 837 residues: AdoMet-dependent rRNA methyltransferase SPB1 (837 aa).

S-adenosyl-L-methionine contacts are provided by Gly58, Trp60, Asp78, Asp94, and Asp119. Residue Lys159 is the Proton acceptor of the active site. Residues 345–390 are a coiled coil; that stretch reads LNEEEQIEKELRDLQEKQKQKQKREKRRKNEEKQKELTRMQMNMLT. Disordered regions lie at residues 359-381, 483-529, 573-644, and 779-808; these read QEKQKQKQKREKRRKNEEKQKEL, FRAK…DEDD, TDDV…TTKE, and TKKQKTKPKVTLVVAHGKNKGLSGRPKGIK. Basic and acidic residues predominate over residues 372 to 381; sequence RKNEEKQKEL. The segment covering 518-529 has biased composition (acidic residues); the sequence is ESDDSELSDEDD. Basic and acidic residues predominate over residues 593 to 602; sequence SYNEMKKEDL. Positions 603–635 are enriched in acidic residues; it reads SDSSDEDSSSESDFEIVANDESDGDIDSDYDSD.

Belongs to the class I-like SAM-binding methyltransferase superfamily. RNA methyltransferase RlmE family. SPB1 subfamily. Component of the nucleolar and nucleoplasmic pre-60S ribosomal particle.

It localises to the nucleus. The protein localises to the nucleolus. It carries out the reaction a ribonucleotide in rRNA + S-adenosyl-L-methionine = a 2'-O-methylribonucleotide in rRNA + S-adenosyl-L-homocysteine + H(+). Required for proper assembly of pre-ribosomal particles during the biogenesis of the 60S ribosomal subunit. In Candida glabrata (strain ATCC 2001 / BCRC 20586 / JCM 3761 / NBRC 0622 / NRRL Y-65 / CBS 138) (Yeast), this protein is AdoMet-dependent rRNA methyltransferase SPB1.